The following is a 192-amino-acid chain: MGVTQENKVIARTVLGAFGGKPKVTKYWDDNKNSSIDILSVSDQPQEGITSYSTLGLSDHSINYEVNGTPLRIEIVAAMESASDIYANVLSTCAFNIINSNFTCAPGVIFKNVISMYDQETDMKHIMFVPPFLWEEDLELLEFSNKNVTWLMALPISEGELQVAEKHGSDYLQDLLESKQIDIFDIKRESVV.

As to quaternary structure, probably interacts with cognate toxin YqcG but not with other non-cognate toxins. The interaction inhibits the toxic activity of YqcG.

It localises to the cytoplasm. In terms of biological role, immunity component of one of 6 LXG toxin-immunity modules in this strain. They promote kin selection, mediate competition in biofilms, and drive spatial segregation of different strains, indicating that LXG toxins may help avoid warfare between strains in biofilms. Mediates intercellular competition during biofilm formation; disruption of the operon disadvantages the bacteria, but overexpression of the cognate immunity protein restores growth in competition with wild-type. In situ neutralizes the toxic effect of cognate toxin YqcG. Neutralizes the toxic activity of cognate toxin YqcG upon expression in E.coli. Does not have immunity protein activity on other LXG toxins. The polypeptide is Immunity protein YqcF (yqcF) (Bacillus subtilis (strain 168)).